The sequence spans 142 residues: 3-hydroxyacyl-[acyl-carrier-protein] dehydratase FabZ (142 aa).

Residue His-48 is part of the active site.

Belongs to the thioester dehydratase family. FabZ subfamily.

It localises to the cytoplasm. The catalysed reaction is a (3R)-hydroxyacyl-[ACP] = a (2E)-enoyl-[ACP] + H2O. Its function is as follows. Involved in unsaturated fatty acids biosynthesis. Catalyzes the dehydration of short chain beta-hydroxyacyl-ACPs and long chain saturated and unsaturated beta-hydroxyacyl-ACPs. The sequence is that of 3-hydroxyacyl-[acyl-carrier-protein] dehydratase FabZ from Desulforamulus reducens (strain ATCC BAA-1160 / DSM 100696 / MI-1) (Desulfotomaculum reducens).